The sequence spans 467 residues: Asparagine--tRNA ligase (467 aa).

Belongs to the class-II aminoacyl-tRNA synthetase family. In terms of assembly, homodimer.

The protein resides in the cytoplasm. The catalysed reaction is tRNA(Asn) + L-asparagine + ATP = L-asparaginyl-tRNA(Asn) + AMP + diphosphate + H(+). The chain is Asparagine--tRNA ligase from Haemophilus influenzae (strain PittEE).